Reading from the N-terminus, the 1197-residue chain is Probable DNA polymerase (1197 aa).

This sequence belongs to the DNA polymerase type-B family.

The protein localises to the mitochondrion. The catalysed reaction is DNA(n) + a 2'-deoxyribonucleoside 5'-triphosphate = DNA(n+1) + diphosphate. The protein is Probable DNA polymerase of Podospora anserina (Pleurage anserina).